The primary structure comprises 295 residues: MPYQQITVNVNDAVAERLADALMEHGALSAAIEDAYAGTQNEQAIFGEPGMPAEQIWQQSKVIALFGEHDEAAAIIQTAAQECGLKDLAYTGEILEDQDWVRLTQAQFDPIRISERLWITPSWHEAPEDTAVNLRLDPGLAFGTGSHPTTRLCLKWLDTQLKNGESVLDYGCGSGILTIAALKLGAGFAVGVDIDEQAVRAGKDNAEQNNVDAQFFLPDGLPQGQFDVVVANILANPLRMLGEMLAARTKQGGRIVLSGLLDEQAEELGGIYSQWFDLDPAETEEGWARLSGTKR.

S-adenosyl-L-methionine contacts are provided by threonine 150, glycine 171, aspartate 193, and asparagine 232.

This sequence belongs to the methyltransferase superfamily. PrmA family.

The protein localises to the cytoplasm. It catalyses the reaction L-lysyl-[protein] + 3 S-adenosyl-L-methionine = N(6),N(6),N(6)-trimethyl-L-lysyl-[protein] + 3 S-adenosyl-L-homocysteine + 3 H(+). Functionally, methylates ribosomal protein L11. The protein is Ribosomal protein L11 methyltransferase of Neisseria meningitidis serogroup A / serotype 4A (strain DSM 15465 / Z2491).